Reading from the N-terminus, the 411-residue chain is Kelch domain-containing protein 10 (411 aa).

Kelch repeat units lie at residues 72–133 (NLYV…LHGH), 135–186 (LLVF…IIHG), 187–239 (FLYV…HDGQ), 240–288 (RIYV…RRCH), 296–342 (EVFI…AVTP), and 345–388 (CMYI…YFPQ).

This sequence belongs to the KLHDC10 family. Component of a CRL2 E3 ubiquitin-protein ligase complex, also named ECS (Elongin BC-CUL2/5-SOCS-box protein) complex, composed of CUL2, Elongin BC (ELOB and ELOC), RBX1 and substrate-specific adapter KLHDC10.

It participates in protein modification; protein ubiquitination. Its function is as follows. Substrate-recognition component of a Cul2-RING (CRL2) E3 ubiquitin-protein ligase complex of the DesCEND (destruction via C-end degrons) pathway, which recognizes a C-degron located at the extreme C terminus of target proteins, leading to their ubiquitination and degradation. The C-degron recognized by the DesCEND pathway is usually a motif of less than ten residues and can be present in full-length proteins, truncated proteins or proteolytically cleaved forms. The CRL2(KLHDC10) complex specifically recognizes proteins with a proline-glycine (Pro-Gly) or an alanine tail (CAT tail) at the C-terminus, leading to their ubiquitination and degradation. The CRL2(KLHDC10) complex is involved in the ribosome-associated quality control (RQC) pathway, which mediates the extraction of incompletely synthesized nascent chains from stalled ribosomes: CRL2(KLHDC10) acts downstream of NEMF and recognizes CAT tails associated with stalled nascent chains, leading to their ubiquitination and degradation. The polypeptide is Kelch domain-containing protein 10 (Xenopus laevis (African clawed frog)).